A 575-amino-acid polypeptide reads, in one-letter code: V-type ATP synthase alpha chain (575 aa).

Residue 238-245 coordinates ATP; sequence GPFGAGKT.

The protein belongs to the ATPase alpha/beta chains family.

It catalyses the reaction ATP + H2O + 4 H(+)(in) = ADP + phosphate + 5 H(+)(out). Its function is as follows. Produces ATP from ADP in the presence of a proton gradient across the membrane. The V-type alpha chain is a catalytic subunit. The polypeptide is V-type ATP synthase alpha chain (Borreliella burgdorferi (strain ZS7) (Borrelia burgdorferi)).